A 333-amino-acid chain; its full sequence is Ornithine carbamoyltransferase (333 aa).

Residues 56-59, arginine 107, and 134-137 each bind carbamoyl phosphate; these read STRT and HPTQ. Residues asparagine 167, aspartate 231, and 235–236 each bind L-ornithine; that span reads SM. Carbamoyl phosphate is bound by residues 273–274 and arginine 318; that span reads CL.

This sequence belongs to the aspartate/ornithine carbamoyltransferase superfamily. OTCase family.

Its subcellular location is the cytoplasm. The enzyme catalyses carbamoyl phosphate + L-ornithine = L-citrulline + phosphate + H(+). It participates in amino-acid degradation; L-arginine degradation via ADI pathway; carbamoyl phosphate from L-arginine: step 2/2. In terms of biological role, reversibly catalyzes the transfer of the carbamoyl group from carbamoyl phosphate (CP) to the N(epsilon) atom of ornithine (ORN) to produce L-citrulline. The polypeptide is Ornithine carbamoyltransferase (Clostridium botulinum (strain Langeland / NCTC 10281 / Type F)).